Consider the following 548-residue polypeptide: Membrane protein insertase YidC (548 aa).

Residues 6-26 traverse the membrane as a helical segment; sequence NLLIIALLFVSFMIWQAWEQD. The segment at 28-52 is disordered; it reads NPQPQQQTTQTTTTAAGSAADQGVP. The span at 29–41 shows a compositional bias: low complexity; that stretch reads PQPQQQTTQTTTT. The next 4 helical transmembrane spans lie at 345–365, 420–440, 458–478, and 499–519; these read KFIH…TFIV, LGGC…YYML, LSAQ…MFFI, and PVIF…YYIV.

This sequence belongs to the OXA1/ALB3/YidC family. Type 1 subfamily. Interacts with the Sec translocase complex via SecD. Specifically interacts with transmembrane segments of nascent integral membrane proteins during membrane integration.

The protein localises to the cell inner membrane. Its function is as follows. Required for the insertion and/or proper folding and/or complex formation of integral membrane proteins into the membrane. Involved in integration of membrane proteins that insert both dependently and independently of the Sec translocase complex, as well as at least some lipoproteins. Aids folding of multispanning membrane proteins. The sequence is that of Membrane protein insertase YidC from Klebsiella pneumoniae subsp. pneumoniae (strain ATCC 700721 / MGH 78578).